Consider the following 1694-residue polypeptide: Methyltransferase/helicase/RNA-directed RNA polymerase (1694 aa).

Residues lysine 194–leucine 444 enclose the Alphavirus-like MT domain. Positions aspartate 829–arginine 983 constitute a (+)RNA virus helicase ATP-binding domain. Residues serine 984–glutamate 1145 enclose the (+)RNA virus helicase C-terminal domain. The RdRp catalytic domain maps to asparagine 1442–leucine 1558.

Belongs to the ssRNA positive-strand viruses RNA-directed RNA polymerase family.

It catalyses the reaction ATP + H2O = ADP + phosphate + H(+). It carries out the reaction RNA(n) + a ribonucleoside 5'-triphosphate = RNA(n+1) + diphosphate. In terms of biological role, RNA-dependent RNA polymerase replicates the viral genome. This Rubus idaeus (Raspberry) protein is Methyltransferase/helicase/RNA-directed RNA polymerase.